The following is a 124-amino-acid chain: Small ribosomal subunit protein uS13 (124 aa).

A disordered region spans residues 91–124; that stretch reads HRKGLPVNGQNTRNNARTRKGKPKAVTGKKQAGK.

The protein belongs to the universal ribosomal protein uS13 family. Part of the 30S ribosomal subunit. Forms a loose heterodimer with protein S19. Forms two bridges to the 50S subunit in the 70S ribosome.

Its function is as follows. Located at the top of the head of the 30S subunit, it contacts several helices of the 16S rRNA. In the 70S ribosome it contacts the 23S rRNA (bridge B1a) and protein L5 of the 50S subunit (bridge B1b), connecting the 2 subunits; these bridges are implicated in subunit movement. Contacts the tRNAs in the A and P-sites. This chain is Small ribosomal subunit protein uS13, found in Acholeplasma laidlawii (strain PG-8A).